Consider the following 505-residue polypeptide: MSEKLWGGRFSTDITDDVLRYTETASVDSRMLEHDLWQNIAHVLMLGRAGINTEPDTKALLAGLLDMESSRADGGLQLDVRQEDVHLNTEFMLIERIGPVGGRMHTARSRNDQVQTDARMVTREWLLDASEELLMFVQDLLGCPESEREAVLPGYTHSQAAQPISVAFWKAAHAQALLRDASRLMDAWKRININPLGACALAGTTFALDRDYTSRLLGFDAPMVNALDATSTRDWTVEVAGAAASGAVNLSRMQEEIVTWSSNEYALAEVHDSFATGSSIMPQKKNPVVAELARGKSGRAVGALVQLLVMEKSVGLGYSCDLQEDKPVYWGALDTYLDTIRLCRRQNLHTAFDGARGRALCWDNFSTATEIANILVSRFDVPFRTAHRITGDLVNAALGGGHTLRNVAFTTTFLREEHDIDISEVDMKQICDPLHTLRSYISAGSTGPTRVSEQQEQGLADVTDRLAEIRQARTRLWEAKAECLRAARSVVGGVSVPELAMEVGV.

This sequence belongs to the lyase 1 family. Argininosuccinate lyase subfamily.

The protein resides in the cytoplasm. The enzyme catalyses 2-(N(omega)-L-arginino)succinate = fumarate + L-arginine. It functions in the pathway amino-acid biosynthesis; L-arginine biosynthesis; L-arginine from L-ornithine and carbamoyl phosphate: step 3/3. The protein is Argininosuccinate lyase of Rhodococcoides fascians (Rhodococcus fascians).